We begin with the raw amino-acid sequence, 953 residues long: ALS2 C-terminal-like protein (953 aa).

MORN repeat units follow at residues 358-380 (YEGE…DGRN), 381-403 (HVGD…QASE), 409-431 (YKCH…TSEV), 432-454 (YKGY…PQAP), 459-481 (YTGH…DRGE), 483-505 (YIGM…AGVC), 506-528 (YQGT…DDSL), and 529-552 (YEGT…NGFT). The VPS9 domain occupies 796–942 (LFPDARLLEF…IQKEDMRLHR (147 aa)).

As to quaternary structure, homodimer. Forms a heteromeric complex with ALS2. Interacts with ALS2 and RAB5A.

It localises to the cytoplasm. In terms of biological role, acts as a guanine nucleotide exchange factor (GEF) for Rab5 GTPase. Regulates the ALS2-mediated endosome dynamics. In Bos taurus (Bovine), this protein is ALS2 C-terminal-like protein (ALS2CL).